Here is a 607-residue protein sequence, read N- to C-terminus: Cytosolic Fe-S cluster assembly factor nar1 (607 aa).

Cysteine 20 contributes to the [4Fe-4S] cluster binding site. Positions 28 to 47 are disordered; that stretch reads PKNESSNSQNPYEVTTEDKV. The segment covering 29 to 40 has biased composition (polar residues); the sequence is KNESSNSQNPYE. Positions 62, 65, 68, 214, and 269 each coordinate [4Fe-4S] cluster. The segment at 439-461 is disordered; it reads ARVPAASAGGNRRQPISRNSASA. The span at 452–461 shows a compositional bias: polar residues; that stretch reads QPISRNSASA. 2 residues coordinate [4Fe-4S] cluster: cysteine 475 and cysteine 479. A compositionally biased stretch (polar residues) spans 494 to 505; that stretch reads ASTSTQSVTAVE. The disordered stretch occupies residues 494–513; it reads ASTSTQSVTAVENPSKPTPH.

This sequence belongs to the NARF family.

Component of the cytosolic Fe/S protein assembly machinery. Required for maturation of extramitochondrial Fe/S proteins. May play a role in the transfer of pre-assembled Fe/S clusters to target apoproteins. This is Cytosolic Fe-S cluster assembly factor nar1 (nar1) from Aspergillus oryzae (strain ATCC 42149 / RIB 40) (Yellow koji mold).